Consider the following 558-residue polypeptide: 2-hydroxy-7-methoxy-5-methyl-1-naphthoate--CoA ligase (558 aa).

ATP contacts are provided by residues 212–213 (GG), 329–331 (ASR), Val351, Asp435, Arg450, and Lys542.

Belongs to the ATP-dependent AMP-binding enzyme family.

The catalysed reaction is 2-hydroxy-7-methoxy-5-methyl-1-naphthoate + ATP + CoA = 2-hydroxy-7-methoxy-5-methyl-1-naphthoyl-CoA + AMP + diphosphate. It functions in the pathway antibiotic biosynthesis. Its function is as follows. Catalyzes the activation of 2-hydroxy-7-methoxy-5-methyl-1-naphthoate in the biosynthesis of the naphthoate moiety of the neocarzinostatin chromophore. Also catalyzes the activation of other 1-naphthoic acid analogs such as 2-hydroxy-5-methyl-1-naphthoate or 2,7-dihydroxy-5-methyl-1-naphthoate in vitro. The sequence is that of 2-hydroxy-7-methoxy-5-methyl-1-naphthoate--CoA ligase from Streptomyces carzinostaticus.